The chain runs to 461 residues: Growth/differentiation factor 7 (461 aa).

A signal peptide spans M1–P19. Residues R20–R315 constitute a propeptide that is removed on maturation. N-linked (GlcNAc...) asparagine glycosylation occurs at N79. The interval L287–C360 is disordered. A compositionally biased stretch (gly residues) spans G323–R350. Over residues G351 to C360 the composition is skewed to basic residues. 3 disulfide bridges follow: C360/C426, C389/C458, and C393/C460.

The protein belongs to the TGF-beta family. In terms of assembly, homodimer; disulfide-linked.

It localises to the secreted. The sequence is that of Growth/differentiation factor 7 (Gdf7) from Mus musculus (Mouse).